Reading from the N-terminus, the 274-residue chain is Large ribosomal subunit protein uL2cz/uL2cy (274 aa).

Residues 224 to 274 form a disordered region; it reads NPVDHPHGGGEGRAPIGRKKPTTPWGYPALGRRSRKRNKYSDNLILRRRSK.

The protein belongs to the universal ribosomal protein uL2 family. In terms of assembly, part of the 50S ribosomal subunit.

Its subcellular location is the plastid. It localises to the chloroplast. This is Large ribosomal subunit protein uL2cz/uL2cy (rpl2-A) from Panax ginseng (Korean ginseng).